The chain runs to 492 residues: Glycosyltransferase alg8 (492 aa).

The next 4 membrane-spanning stretches (helical) occupy residues 13–32, 47–69, 379–401, and 421–443; these read GWLL…PPQV, IGVW…LYVV, LTVA…LLWV, and PAYP…HVFF.

This sequence belongs to the glycosyltransferase 2 family.

Its subcellular location is the cell membrane. The protein operates within glycan biosynthesis; alginate biosynthesis. Possibly a processive enzyme that polymerizes GDP-mannuronic acid. The chain is Glycosyltransferase alg8 (alg8) from Azotobacter vinelandii.